Here is a 264-residue protein sequence, read N- to C-terminus: Phosphonoacetaldehyde hydrolase (264 aa).

Aspartate 9 (nucleophile) is an active-site residue. Mg(2+) contacts are provided by aspartate 9 and alanine 11. The active-site Schiff-base intermediate with substrate is lysine 50. Residue aspartate 183 coordinates Mg(2+).

It belongs to the HAD-like hydrolase superfamily. PhnX family. As to quaternary structure, homodimer. Mg(2+) serves as cofactor.

The enzyme catalyses phosphonoacetaldehyde + H2O = acetaldehyde + phosphate + H(+). Its function is as follows. Involved in phosphonate degradation. This is Phosphonoacetaldehyde hydrolase from Bacillus thuringiensis (strain Al Hakam).